The primary structure comprises 415 residues: F-box/kelch-repeat protein At2g29600 (415 aa).

The tract at residues 1–58 (MASISETSDDGSNGGDPNQKPEEPHKNPQEGKEEENQNEKPKEDDHQEEEVENVPQIP) is disordered. The span at 19–45 (QKPEEPHKNPQEGKEEENQNEKPKEDD) shows a compositional bias: basic and acidic residues. The region spanning 56-103 (QIPPQMPLELIVSTIATLRRCHYPTLSLLSDSFRQVISSVDLFQTRSL) is the F-box domain. 4 Kelch repeats span residues 161-208 (KIYV…VIDG), 210-254 (IYVV…FNVH), 260-309 (KIYI…AVVP), and 311-355 (HLHV…KLMI).

In Arabidopsis thaliana (Mouse-ear cress), this protein is F-box/kelch-repeat protein At2g29600.